An 876-amino-acid chain; its full sequence is Protein argonaute 17 (876 aa).

The PAZ domain occupies 246–338 (PVVDYVAQLL…LPLEVCKIAE (93 aa)). One can recognise a Piwi domain in the interval 514-834 (LLIVILPNNN…LSSRARCYIK (321 aa)). The tract at residues 839–859 (GDSTSHTSLPSEEDSSAASET) is disordered.

Belongs to the argonaute family. Ago subfamily.

Probably involved in the RNA silencing pathway. May bind to short RNAs such as microRNAs (miRNAs) or short interfering RNAs (siRNAs), and represses the translation of mRNAs which are complementary to them. The polypeptide is Protein argonaute 17 (AGO17) (Oryza sativa subsp. japonica (Rice)).